The following is a 204-amino-acid chain: uncharacterized protein (204 aa).

4 helical membrane-spanning segments follow: residues 21–50 (AWIVFFTIPLVITPLPYVGFLAFFFILLFF), 92–114 (FFTALLYYLFTKFYAVLFFWWWF), 150–172 (LGLRWSFIGLVLLTIAVLLVLSI), and 176–198 (LLASFVVLLLSVVLAHFTAETIL).

The protein localises to the cell membrane. This is an uncharacterized protein from Aquifex aeolicus (strain VF5).